The following is a 191-amino-acid chain: Early nodulin-like protein 8 (191 aa).

The signal sequence occupies residues 1 to 22; sequence MGVMSLSKTMVVVVLQVMILLG. The region spanning 31–133 is the Phytocyanin domain; the sequence is TLYKVGDLDA…YQKLLVSVGT (103 aa). Cys-87 and Cys-121 are disulfide-bonded. Residues Asn-104 and Asn-108 are each glycosylated (N-linked (GlcNAc...) asparagine). Residue Ser-165 is the site of GPI-anchor amidated serine attachment. A propeptide spans 166–191 (removed in mature form); sequence SASSSLISAFSTVAASLACAVVGAIM.

The protein belongs to the early nodulin-like (ENODL) family. Mostly expressed in seedlings and roots, and, to a lower extent, in leaves, flowers, stems and seeds.

The protein localises to the cell membrane. May act as a carbohydrate transporter. The polypeptide is Early nodulin-like protein 8 (Arabidopsis thaliana (Mouse-ear cress)).